The sequence spans 273 residues: 4-hydroxy-tetrahydrodipicolinate reductase (273 aa).

NAD(+)-binding positions include Gly11–Met16 and Gly106–Thr108. The Proton donor/acceptor role is filled by His162. His163 contacts (S)-2,3,4,5-tetrahydrodipicolinate. Lys166 serves as the catalytic Proton donor. Residue Gly172–Thr173 coordinates (S)-2,3,4,5-tetrahydrodipicolinate.

This sequence belongs to the DapB family.

Its subcellular location is the cytoplasm. It carries out the reaction (S)-2,3,4,5-tetrahydrodipicolinate + NAD(+) + H2O = (2S,4S)-4-hydroxy-2,3,4,5-tetrahydrodipicolinate + NADH + H(+). It catalyses the reaction (S)-2,3,4,5-tetrahydrodipicolinate + NADP(+) + H2O = (2S,4S)-4-hydroxy-2,3,4,5-tetrahydrodipicolinate + NADPH + H(+). It functions in the pathway amino-acid biosynthesis; L-lysine biosynthesis via DAP pathway; (S)-tetrahydrodipicolinate from L-aspartate: step 4/4. Catalyzes the conversion of 4-hydroxy-tetrahydrodipicolinate (HTPA) to tetrahydrodipicolinate. This is 4-hydroxy-tetrahydrodipicolinate reductase from Synechococcus sp. (strain RCC307).